Here is a 135-residue protein sequence, read N- to C-terminus: Putative pre-16S rRNA nuclease (135 aa).

This sequence belongs to the YqgF nuclease family.

The protein localises to the cytoplasm. Could be a nuclease involved in processing of the 5'-end of pre-16S rRNA. In Clostridium acetobutylicum (strain ATCC 824 / DSM 792 / JCM 1419 / IAM 19013 / LMG 5710 / NBRC 13948 / NRRL B-527 / VKM B-1787 / 2291 / W), this protein is Putative pre-16S rRNA nuclease.